We begin with the raw amino-acid sequence, 419 residues long: MDKFRVQGPTKLQGEVTISGAKNAALPILFAALLAEEPVEIQNVPKLKDVDTSMKLLSQLGAKVERNGSVHIDARDVNVFCAPYDLVKTMRASIWALGPLVARFGQGQVSLPGGCTIGARPVDLHISGLEQLGATIKLEEGYVKASVDGRLKGAHIVMDKVSVGATVTIMCSATLAEGTTIIENAAREPEIVDTANFLITLGAKISGQGTDRIVIEGVERLGGGVYRVLPDRIETGTFLVAAAISRGKIICRNAQPDTLDAVLAKLRDAGADIEVGEDWISLDMHGKRPKAVNVRTAPHPAFPTDMQAQFTLLNLVAEGTGFITETVFENRFMHVPELSRMGAHAEIESNTVICHGVEKLSGAQVMATDLRASASLVLAGCIAEGTTVVDRIYHIDRGYERIEDKLRALGVNIERVKGE.

22-23 (KN) provides a ligand contact to phosphoenolpyruvate. R91 provides a ligand contact to UDP-N-acetyl-alpha-D-glucosamine. Catalysis depends on C115, which acts as the Proton donor. A 2-(S-cysteinyl)pyruvic acid O-phosphothioketal modification is found at C115. UDP-N-acetyl-alpha-D-glucosamine is bound by residues 120-124 (RPVDL), 160-163 (KVSV), D305, and V327.

Belongs to the EPSP synthase family. MurA subfamily.

The protein localises to the cytoplasm. It carries out the reaction phosphoenolpyruvate + UDP-N-acetyl-alpha-D-glucosamine = UDP-N-acetyl-3-O-(1-carboxyvinyl)-alpha-D-glucosamine + phosphate. Its pathway is cell wall biogenesis; peptidoglycan biosynthesis. Cell wall formation. Adds enolpyruvyl to UDP-N-acetylglucosamine. The protein is UDP-N-acetylglucosamine 1-carboxyvinyltransferase of Shigella dysenteriae serotype 1 (strain Sd197).